A 118-amino-acid chain; its full sequence is MNAKALYKKKALRDRRKLRIKSKLLGDALRPRVSVFRSNRYFYAQAIDDVKQSTITHIDGRKMGFKNTQEDAKKLGALFAEELKKAGIERAVYDRNGYLYHGVVAAFAESLRENGIAL.

This sequence belongs to the universal ribosomal protein uL18 family. In terms of assembly, part of the 50S ribosomal subunit; part of the 5S rRNA/L5/L18/L25 subcomplex. Contacts the 5S and 23S rRNAs.

Its function is as follows. This is one of the proteins that bind and probably mediate the attachment of the 5S RNA into the large ribosomal subunit, where it forms part of the central protuberance. The protein is Large ribosomal subunit protein uL18 of Helicobacter pylori (strain P12).